Here is a 95-residue protein sequence, read N- to C-terminus: UPF0235 protein Adeh_1087 (95 aa).

This sequence belongs to the UPF0235 family.

This chain is UPF0235 protein Adeh_1087, found in Anaeromyxobacter dehalogenans (strain 2CP-C).